A 1003-amino-acid chain; its full sequence is Translation initiation factor IF-2 (1003 aa).

Composition is skewed to basic and acidic residues over residues 61–74 (EKFS…DRNK), 139–169 (PVVE…KKPE), 180–206 (LEEK…KETP), 219–229 (VFKIRPTEFKS), and 252–290 (SKEE…DKIS). Disordered regions lie at residues 61–81 (EKFS…SIEG) and 135–362 (PKAE…KDRF). Over residues 315–350 (NAAGTTNAGGASNNNQRNDNANRPNRNNNSKPNGNN) the composition is skewed to low complexity. One can recognise a tr-type G domain in the interval 502–672 (PRAPIVTVMG…LLEAEMLDLK (171 aa)). Residues 511-518 (GHVDHGKT) form a G1 region. 511 to 518 (GHVDHGKT) is a binding site for GTP. The G2 stretch occupies residues 536-540 (GITQH). The interval 558-561 (DTPG) is G3. GTP-binding positions include 558-562 (DTPGH) and 612-615 (NKVD). Positions 612–615 (NKVD) are G4. Residues 648–650 (SAK) form a G5 region.

It belongs to the TRAFAC class translation factor GTPase superfamily. Classic translation factor GTPase family. IF-2 subfamily.

The protein localises to the cytoplasm. In terms of biological role, one of the essential components for the initiation of protein synthesis. Protects formylmethionyl-tRNA from spontaneous hydrolysis and promotes its binding to the 30S ribosomal subunits. Also involved in the hydrolysis of GTP during the formation of the 70S ribosomal complex. This chain is Translation initiation factor IF-2, found in Phocaeicola vulgatus (strain ATCC 8482 / DSM 1447 / JCM 5826 / CCUG 4940 / NBRC 14291 / NCTC 11154) (Bacteroides vulgatus).